We begin with the raw amino-acid sequence, 309 residues long: Malate dehydrogenase (309 aa).

NAD(+)-binding positions include 8–13 (GAGLVG) and Asp-33. Residues Arg-82 and Arg-88 each coordinate substrate. NAD(+)-binding positions include Asn-95 and 118–120 (VSN). Residues Asn-120 and Arg-151 each coordinate substrate. His-175 functions as the Proton acceptor in the catalytic mechanism.

Belongs to the LDH/MDH superfamily. MDH type 3 family.

It carries out the reaction (S)-malate + NAD(+) = oxaloacetate + NADH + H(+). Functionally, catalyzes the reversible oxidation of malate to oxaloacetate. This is Malate dehydrogenase from Pseudomonas putida (strain GB-1).